The sequence spans 270 residues: tRNA pseudouridine synthase B (270 aa).

The Nucleophile role is filled by Asp49.

This sequence belongs to the pseudouridine synthase TruB family. Type 1 subfamily.

It carries out the reaction uridine(55) in tRNA = pseudouridine(55) in tRNA. Its function is as follows. Responsible for synthesis of pseudouridine from uracil-55 in the psi GC loop of transfer RNAs. The protein is tRNA pseudouridine synthase B of Bartonella quintana (strain Toulouse) (Rochalimaea quintana).